We begin with the raw amino-acid sequence, 187 residues long: Flavin prenyltransferase LpdB (187 aa).

FMN is bound by residues 10 to 12, Ser-37, 88 to 91, and Arg-123; these read GAS and SMKT. Residues Tyr-153 and Lys-169 each coordinate dimethylallyl phosphate.

The protein belongs to the UbiX/PAD1 family.

It catalyses the reaction dimethylallyl phosphate + FMNH2 = prenylated FMNH2 + phosphate. Involved in tannin degradation. Flavin prenyltransferase that catalyzes the synthesis of the prenylated FMN cofactor (prenyl-FMN) for gallate decarboxylase LpdC. The prenyltransferase is metal-independent and links a dimethylallyl moiety from dimethylallyl monophosphate (DMAP) to the flavin N5 and C6 atoms of FMN. The protein is Flavin prenyltransferase LpdB of Lactiplantibacillus plantarum (strain ATCC BAA-793 / NCIMB 8826 / WCFS1) (Lactobacillus plantarum).